Consider the following 57-residue polypeptide: UPF0509 protein YciZ (57 aa).

Belongs to the UPF0509 family.

This chain is UPF0509 protein YciZ, found in Escherichia coli O127:H6 (strain E2348/69 / EPEC).